The sequence spans 115 residues: Non-specific lipid-transfer protein Cor a 8.0101 (115 aa).

A signal peptide spans 1 to 23 (MGSLKLVCAVLLCMMVAAPVARA). Intrachain disulfides connect Cys-27–Cys-74, Cys-37–Cys-51, Cys-52–Cys-97, and Cys-72–Cys-111.

Belongs to the plant LTP family. Monomer. As to expression, expressed in seed (at protein level). Expressed in seed.

Its function is as follows. Plant non-specific lipid-transfer proteins transfer phospholipids as well as galactolipids across membranes. May play a role in wax or cutin deposition in the cell walls of expanding epidermal cells and certain secretory tissues. The protein is Non-specific lipid-transfer protein Cor a 8.0101 of Corylus avellana (European hazel).